The chain runs to 287 residues: 4-diphosphocytidyl-2-C-methyl-D-erythritol kinase (287 aa).

Lysine 14 is a catalytic residue. Proline 96–serine 106 provides a ligand contact to ATP. Aspartate 138 is an active-site residue.

This sequence belongs to the GHMP kinase family. IspE subfamily.

The catalysed reaction is 4-CDP-2-C-methyl-D-erythritol + ATP = 4-CDP-2-C-methyl-D-erythritol 2-phosphate + ADP + H(+). It functions in the pathway isoprenoid biosynthesis; isopentenyl diphosphate biosynthesis via DXP pathway; isopentenyl diphosphate from 1-deoxy-D-xylulose 5-phosphate: step 3/6. In terms of biological role, catalyzes the phosphorylation of the position 2 hydroxy group of 4-diphosphocytidyl-2C-methyl-D-erythritol. The chain is 4-diphosphocytidyl-2-C-methyl-D-erythritol kinase from Methylibium petroleiphilum (strain ATCC BAA-1232 / LMG 22953 / PM1).